We begin with the raw amino-acid sequence, 489 residues long: Rhamnulokinase (489 aa).

Residue 13 to 17 (ASSGR) participates in ATP binding. Cys-68 and Cys-222 are oxidised to a cystine. Residues Gly-83 and 236–238 (HDT) contribute to the substrate site. The active-site Proton acceptor is the Asp-237. Thr-259 lines the ATP pocket. Asn-296 serves as a coordination point for substrate. ATP is bound at residue Gln-304. Cys-353 and Cys-370 are oxidised to a cystine. Gly-402 provides a ligand contact to ATP. Cys-413 and Cys-417 form a disulfide bridge.

This sequence belongs to the rhamnulokinase family. It depends on Mg(2+) as a cofactor.

The enzyme catalyses L-rhamnulose + ATP = L-rhamnulose 1-phosphate + ADP + H(+). It participates in carbohydrate degradation; L-rhamnose degradation; glycerone phosphate from L-rhamnose: step 2/3. Functionally, involved in the catabolism of L-rhamnose (6-deoxy-L-mannose). Catalyzes the transfer of the gamma-phosphate group from ATP to the 1-hydroxyl group of L-rhamnulose to yield L-rhamnulose 1-phosphate. The protein is Rhamnulokinase of Salmonella heidelberg (strain SL476).